Reading from the N-terminus, the 127-residue chain is Aspartate 1-decarboxylase (127 aa).

Serine 25 functions as the Schiff-base intermediate with substrate; via pyruvic acid in the catalytic mechanism. Serine 25 carries the post-translational modification Pyruvic acid (Ser). Position 57 (threonine 57) interacts with substrate. Residue tyrosine 58 is the Proton donor of the active site. Residue 73-75 (GAA) participates in substrate binding.

It belongs to the PanD family. As to quaternary structure, heterooctamer of four alpha and four beta subunits. The cofactor is pyruvate. In terms of processing, is synthesized initially as an inactive proenzyme, which is activated by self-cleavage at a specific serine bond to produce a beta-subunit with a hydroxyl group at its C-terminus and an alpha-subunit with a pyruvoyl group at its N-terminus.

It localises to the cytoplasm. It carries out the reaction L-aspartate + H(+) = beta-alanine + CO2. The protein operates within cofactor biosynthesis; (R)-pantothenate biosynthesis; beta-alanine from L-aspartate: step 1/1. Catalyzes the pyruvoyl-dependent decarboxylation of aspartate to produce beta-alanine. The protein is Aspartate 1-decarboxylase of Shouchella clausii (strain KSM-K16) (Alkalihalobacillus clausii).